The following is a 364-amino-acid chain: Lipoyl synthase, chloroplastic (364 aa).

The transit peptide at 1–70 (MEQTLFNPSI…PNVKKPEWLR (70 aa)) directs the protein to the chloroplast. The segment covering 32–52 (STNSPSSNTKTTTVTVPSKKT) has biased composition (low complexity). Residues 32-64 (STNSPSSNTKTTTVTVPSKKTMGPYTGRDPNVK) form a disordered region. The [4Fe-4S] cluster site is built by C95, C100, C106, C126, C130, C133, and S341. Residues 109–330 (GGGDGIATAT…KEYGESIGFR (222 aa)) form the Radical SAM core domain.

This sequence belongs to the radical SAM superfamily. Lipoyl synthase family. Requires [4Fe-4S] cluster as cofactor.

The protein localises to the plastid. It localises to the chloroplast. The catalysed reaction is [[Fe-S] cluster scaffold protein carrying a second [4Fe-4S](2+) cluster] + N(6)-octanoyl-L-lysyl-[protein] + 2 oxidized [2Fe-2S]-[ferredoxin] + 2 S-adenosyl-L-methionine + 4 H(+) = [[Fe-S] cluster scaffold protein] + N(6)-[(R)-dihydrolipoyl]-L-lysyl-[protein] + 4 Fe(3+) + 2 hydrogen sulfide + 2 5'-deoxyadenosine + 2 L-methionine + 2 reduced [2Fe-2S]-[ferredoxin]. Its pathway is protein modification; protein lipoylation via endogenous pathway; protein N(6)-(lipoyl)lysine from octanoyl-[acyl-carrier-protein]: step 2/2. Catalyzes the radical-mediated insertion of two sulfur atoms into the C-6 and C-8 positions of the octanoyl moiety bound to the lipoyl domains of lipoate-dependent enzymes, thereby converting the octanoylated domains into lipoylated derivatives. The polypeptide is Lipoyl synthase, chloroplastic (Ricinus communis (Castor bean)).